The sequence spans 990 residues: Bifunctional glutamine synthetase adenylyltransferase/adenylyl-removing enzyme (990 aa).

The tract at residues 1 to 474 (MIFSAITADL…HYAKLFEGDP (474 aa)) is adenylyl removase. An adenylyl transferase region spans residues 478-990 (AKLPPVDYGA…FNRLIGGEDA (513 aa)).

This sequence belongs to the GlnE family. Mg(2+) serves as cofactor.

The enzyme catalyses [glutamine synthetase]-O(4)-(5'-adenylyl)-L-tyrosine + phosphate = [glutamine synthetase]-L-tyrosine + ADP. It carries out the reaction [glutamine synthetase]-L-tyrosine + ATP = [glutamine synthetase]-O(4)-(5'-adenylyl)-L-tyrosine + diphosphate. In terms of biological role, involved in the regulation of glutamine synthetase GlnA, a key enzyme in the process to assimilate ammonia. When cellular nitrogen levels are high, the C-terminal adenylyl transferase (AT) inactivates GlnA by covalent transfer of an adenylyl group from ATP to specific tyrosine residue of GlnA, thus reducing its activity. Conversely, when nitrogen levels are low, the N-terminal adenylyl removase (AR) activates GlnA by removing the adenylyl group by phosphorolysis, increasing its activity. The regulatory region of GlnE binds the signal transduction protein PII (GlnB) which indicates the nitrogen status of the cell. The sequence is that of Bifunctional glutamine synthetase adenylyltransferase/adenylyl-removing enzyme from Rhodopseudomonas palustris (strain TIE-1).